A 365-amino-acid polypeptide reads, in one-letter code: Terpene cyclase DEP1 (365 aa).

The next 8 membrane-spanning stretches (helical) occupy residues 10 to 30, 82 to 102, 116 to 136, 158 to 178, 188 to 208, 233 to 253, 297 to 317, and 338 to 358; these read LYLS…NGMF, LLFF…LIES, AWAM…IYLY, LPII…PAWF, ALIA…VGIT, LILA…GALF, LFSQ…AQLL, and MIYL…SFAL.

The protein belongs to the membrane-bound ascI terpene cyclase family.

It localises to the membrane. It participates in polyketide biosynthesis. Part of the gene cluster that mediates the biosynthesis of depudecin, a highly oxidized eleven-carbon linear polyketide that acts as a histone deacetylase (HDAC) inhibitor and makes a small contribution to pathogenesis. The reducing polyketide synthase DEP5 is the central enzyme in depudecin biosynthesis by yielding the backbone polyketide chain. The monooxygenases DEP2 and DEP4, as well as the uncharacterized protein DEP1, then act as tailoring enzymes to modify the intermediate polyketide chain into depudecin. The protein is Terpene cyclase DEP1 of Fusarium langsethiae.